Consider the following 957-residue polypeptide: Glycine dehydrogenase (decarboxylating) (957 aa).

The residue at position 708 (Lys708) is an N6-(pyridoxal phosphate)lysine.

The protein belongs to the GcvP family. The glycine cleavage system is composed of four proteins: P, T, L and H. Pyridoxal 5'-phosphate serves as cofactor.

It catalyses the reaction N(6)-[(R)-lipoyl]-L-lysyl-[glycine-cleavage complex H protein] + glycine + H(+) = N(6)-[(R)-S(8)-aminomethyldihydrolipoyl]-L-lysyl-[glycine-cleavage complex H protein] + CO2. In terms of biological role, the glycine cleavage system catalyzes the degradation of glycine. The P protein binds the alpha-amino group of glycine through its pyridoxal phosphate cofactor; CO(2) is released and the remaining methylamine moiety is then transferred to the lipoamide cofactor of the H protein. The sequence is that of Glycine dehydrogenase (decarboxylating) from Escherichia coli O157:H7.